Reading from the N-terminus, the 237-residue chain is Small ribosomal subunit protein uS3 (237 aa).

The region spanning Ile39–Arg107 is the KH type-2 domain. The interval Met213 to Ala237 is disordered.

Belongs to the universal ribosomal protein uS3 family. As to quaternary structure, part of the 30S ribosomal subunit. Forms a tight complex with proteins S10 and S14.

Binds the lower part of the 30S subunit head. Binds mRNA in the 70S ribosome, positioning it for translation. This Sinorhizobium fredii (strain NBRC 101917 / NGR234) protein is Small ribosomal subunit protein uS3.